Consider the following 218-residue polypeptide: 23 kDa integral membrane protein (218 aa).

At 1–12 (MATLGTGMRCLK) the chain is on the cytoplasmic side. The helical transmembrane segment at 13–36 (SCVFVLNIICLLCSLVLIGAGAYV) threads the bilayer. Topologically, residues 37 to 55 (EVKFSQYGDNLHKVWQAAP) are extracellular. The helical transmembrane segment at 56–71 (IAIIVVGVIILIVSFL) threads the bilayer. The Cytoplasmic segment spans residues 72-82 (GCCGAIKENVC). A helical membrane pass occupies residues 83–108 (MLYMYAFFLVVLLIAELAAAIVAVVY). Residues 109-183 (KDRIDSEIDA…SVFGAFLKRN (75 aa)) lie on the Extracellular side of the membrane. A glycan (N-linked (GlcNAc...) asparagine) is linked at Asn-165. The chain crosses the membrane as a helical span at residues 184–205 (LVIVACVAFGVCFFQLLSIVIA). Topologically, residues 206 to 218 (CCLGRQIKEYENV) are cytoplasmic.

It belongs to the tetraspanin (TM4SF) family.

The protein resides in the membrane. This is 23 kDa integral membrane protein from Schistosoma mansoni (Blood fluke).